Here is a 476-residue protein sequence, read N- to C-terminus: Aspartyl/glutamyl-tRNA(Asn/Gln) amidotransferase subunit B (476 aa).

Belongs to the GatB/GatE family. GatB subfamily. Heterotrimer of A, B and C subunits.

The enzyme catalyses L-glutamyl-tRNA(Gln) + L-glutamine + ATP + H2O = L-glutaminyl-tRNA(Gln) + L-glutamate + ADP + phosphate + H(+). The catalysed reaction is L-aspartyl-tRNA(Asn) + L-glutamine + ATP + H2O = L-asparaginyl-tRNA(Asn) + L-glutamate + ADP + phosphate + 2 H(+). Functionally, allows the formation of correctly charged Asn-tRNA(Asn) or Gln-tRNA(Gln) through the transamidation of misacylated Asp-tRNA(Asn) or Glu-tRNA(Gln) in organisms which lack either or both of asparaginyl-tRNA or glutaminyl-tRNA synthetases. The reaction takes place in the presence of glutamine and ATP through an activated phospho-Asp-tRNA(Asn) or phospho-Glu-tRNA(Gln). In Lactobacillus acidophilus (strain ATCC 700396 / NCK56 / N2 / NCFM), this protein is Aspartyl/glutamyl-tRNA(Asn/Gln) amidotransferase subunit B.